A 430-amino-acid chain; its full sequence is Glutamate-1-semialdehyde 2,1-aminomutase (430 aa).

N6-(pyridoxal phosphate)lysine is present on Lys-267.

Belongs to the class-III pyridoxal-phosphate-dependent aminotransferase family. HemL subfamily. As to quaternary structure, homodimer. It depends on pyridoxal 5'-phosphate as a cofactor.

Its subcellular location is the cytoplasm. It carries out the reaction (S)-4-amino-5-oxopentanoate = 5-aminolevulinate. It participates in porphyrin-containing compound metabolism; protoporphyrin-IX biosynthesis; 5-aminolevulinate from L-glutamyl-tRNA(Glu): step 2/2. The protein is Glutamate-1-semialdehyde 2,1-aminomutase of Anaeromyxobacter dehalogenans (strain 2CP-1 / ATCC BAA-258).